The primary structure comprises 186 residues: Peptidyl-tRNA hydrolase (186 aa).

Tyrosine 17 is a tRNA binding site. Histidine 22 functions as the Proton acceptor in the catalytic mechanism. TRNA-binding residues include tyrosine 64 and asparagine 66.

Belongs to the PTH family. In terms of assembly, monomer.

It is found in the cytoplasm. It catalyses the reaction an N-acyl-L-alpha-aminoacyl-tRNA + H2O = an N-acyl-L-amino acid + a tRNA + H(+). Functionally, hydrolyzes ribosome-free peptidyl-tRNAs (with 1 or more amino acids incorporated), which drop off the ribosome during protein synthesis, or as a result of ribosome stalling. Its function is as follows. Catalyzes the release of premature peptidyl moieties from peptidyl-tRNA molecules trapped in stalled 50S ribosomal subunits, and thus maintains levels of free tRNAs and 50S ribosomes. The protein is Peptidyl-tRNA hydrolase of Methylacidiphilum infernorum (isolate V4) (Methylokorus infernorum (strain V4)).